Reading from the N-terminus, the 385-residue chain is Aliphatic amidase expression-regulating protein (385 aa).

As to quaternary structure, homodimer. Forms a complex with AmiR.

Its function is as follows. Negatively regulates the expression of the aliphatic amidase operon. AmiC functions by inhibiting the action of AmiR at the protein level. It exhibits protein kinase activity. The sequence is that of Aliphatic amidase expression-regulating protein (amiC) from Pseudomonas aeruginosa (strain ATCC 15692 / DSM 22644 / CIP 104116 / JCM 14847 / LMG 12228 / 1C / PRS 101 / PAO1).